Here is a 102-residue protein sequence, read N- to C-terminus: Protein ORF28 (102 aa).

The helical transmembrane segment at 28-48 (VIGLITVLFLLVIGACVYCCI) threads the bilayer.

It is found in the host membrane. The sequence is that of Protein ORF28 (ORF28) from Homo sapiens (Human).